Reading from the N-terminus, the 278-residue chain is Thiazole synthase (278 aa).

K107 (schiff-base intermediate with DXP) is an active-site residue. 1-deoxy-D-xylulose 5-phosphate contacts are provided by residues G168, 194–195, and 216–217; these read AG and AS.

Belongs to the ThiG family. As to quaternary structure, homotetramer. Forms heterodimers with either ThiH or ThiS.

The protein resides in the cytoplasm. It carries out the reaction [ThiS sulfur-carrier protein]-C-terminal-Gly-aminoethanethioate + 2-iminoacetate + 1-deoxy-D-xylulose 5-phosphate = [ThiS sulfur-carrier protein]-C-terminal Gly-Gly + 2-[(2R,5Z)-2-carboxy-4-methylthiazol-5(2H)-ylidene]ethyl phosphate + 2 H2O + H(+). It functions in the pathway cofactor biosynthesis; thiamine diphosphate biosynthesis. In terms of biological role, catalyzes the rearrangement of 1-deoxy-D-xylulose 5-phosphate (DXP) to produce the thiazole phosphate moiety of thiamine. Sulfur is provided by the thiocarboxylate moiety of the carrier protein ThiS. In vitro, sulfur can be provided by H(2)S. The chain is Thiazole synthase from Corynebacterium urealyticum (strain ATCC 43042 / DSM 7109).